The primary structure comprises 321 residues: AA9 family lytic polysaccharide monooxygenase D (321 aa).

The signal sequence occupies residues 1–21; that stretch reads MRSTIVATFAAGLVVASLVAA. H22 is a binding site for Cu(2+). Cystine bridges form between C75–C192 and C116–C120. Residue N78 is glycosylated (N-linked (GlcNAc...) asparagine). Residue H105 participates in Cu(2+) binding. N-linked (GlcNAc...) asparagine glycosylation is present at N152. O2-binding residues include H178 and Q187. A Cu(2+)-binding site is contributed by Y189. N-linked (GlcNAc...) asparagine glycosylation occurs at N266.

This sequence belongs to the polysaccharide monooxygenase AA9 family. It depends on Cu(2+) as a cofactor.

The protein localises to the secreted. The catalysed reaction is [(1-&gt;4)-beta-D-glucosyl]n+m + reduced acceptor + O2 = 4-dehydro-beta-D-glucosyl-[(1-&gt;4)-beta-D-glucosyl]n-1 + [(1-&gt;4)-beta-D-glucosyl]m + acceptor + H2O.. Its function is as follows. Lytic polysaccharide monooxygenase (LPMO) that depolymerizes crystalline and amorphous polysaccharides via the oxidation of scissile alpha- or beta-(1-4)-glycosidic bonds, yielding C1 or C4 oxidation products. Catalysis by LPMOs requires the reduction of the active-site copper from Cu(II) to Cu(I) by a reducing agent and H(2)O(2) or O(2) as a cosubstrate. This is AA9 family lytic polysaccharide monooxygenase D from Geotrichum candidum (Oospora lactis).